The sequence spans 249 residues: Chitooligosaccharide deacetylase (249 aa).

Residues His61 and His125 each coordinate Mg(2+).

This sequence belongs to the YdjC deacetylase family. ChbG subfamily. In terms of assembly, homodimer. Mg(2+) serves as cofactor.

It localises to the cytoplasm. The enzyme catalyses N,N'-diacetylchitobiose + H2O = N-acetyl-beta-D-glucosaminyl-(1-&gt;4)-D-glucosamine + acetate. The catalysed reaction is diacetylchitobiose-6'-phosphate + H2O = N'-monoacetylchitobiose-6'-phosphate + acetate. The protein operates within glycan degradation; chitin degradation. In terms of biological role, involved in the degradation of chitin. ChbG is essential for growth on the acetylated chitooligosaccharides chitobiose and chitotriose but is dispensable for growth on cellobiose and chitosan dimer, the deacetylated form of chitobiose. Deacetylation of chitobiose-6-P and chitotriose-6-P is necessary for both the activation of the chb promoter by the regulatory protein ChbR and the hydrolysis of phosphorylated beta-glucosides by the phospho-beta-glucosidase ChbF. Catalyzes the removal of only one acetyl group from chitobiose-6-P to yield monoacetylchitobiose-6-P, the inducer of ChbR and the substrate of ChbF. The polypeptide is Chitooligosaccharide deacetylase (Escherichia coli O17:K52:H18 (strain UMN026 / ExPEC)).